A 950-amino-acid chain; its full sequence is Nonsense-mediated mRNA decay factor SMG8 (950 aa).

Disordered stretches follow at residues 560-607 (HTGK…LSPT) and 624-651 (NESQ…ADTE). The span at 568 to 582 (QDEDGEEDAEDEEGQ) shows a compositional bias: acidic residues. The segment covering 593-607 (QNTASNGCSQPLSPT) has biased composition (polar residues). The span at 624–648 (NESQASSEQLSNSEQNSTSSGTSSA) shows a compositional bias: low complexity.

It belongs to the SMG8 family.

In terms of biological role, involved in nonsense-mediated decay (NMD) of mRNAs containing premature stop codons. Probable component of kinase complex containing nonC and recruited to stalled ribosomes. The polypeptide is Nonsense-mediated mRNA decay factor SMG8 (Drosophila yakuba (Fruit fly)).